The chain runs to 210 residues: Thymidylate kinase (210 aa).

Residue 10–17 (GPEGAGKS) coordinates ATP.

It belongs to the thymidylate kinase family.

It catalyses the reaction dTMP + ATP = dTDP + ADP. Functionally, phosphorylation of dTMP to form dTDP in both de novo and salvage pathways of dTTP synthesis. In Pseudomonas entomophila (strain L48), this protein is Thymidylate kinase.